A 181-amino-acid chain; its full sequence is uncharacterized protein (181 aa).

This sequence belongs to the isochorismatase family.

This is an uncharacterized protein from Bacillus subtilis (strain 168).